We begin with the raw amino-acid sequence, 134 residues long: Putative pre-16S rRNA nuclease (134 aa).

The protein belongs to the YqgF nuclease family.

The protein resides in the cytoplasm. Could be a nuclease involved in processing of the 5'-end of pre-16S rRNA. The protein is Putative pre-16S rRNA nuclease of Helicobacter pylori (strain P12).